Consider the following 1033-residue polypeptide: Tyrosine-protein kinase-like otk (1033 aa).

Positions 1–22 are cleaved as a signal peptide; that stretch reads MTARMISIYGLVLASMMASVLA. Over 23-581 the chain is Extracellular; sequence SSSRFQRLPQ…GGDGFLVTRA (559 aa). Ig-like C2-type domains lie at 25 to 114, 113 to 199, 251 to 365, 368 to 463, and 468 to 558; these read SRFQ…AKLS, LSVI…RVMS, PEDL…VPVS, PGVL…VAIN, and PKFS…VQLI. The N-linked (GlcNAc...) asparagine glycan is linked to Asn-39. Disulfide bonds link Cys-46–Cys-95, Cys-137–Cys-188, Cys-276–Cys-354, and Cys-399–Cys-447. Asn-336, Asn-417, Asn-429, Asn-444, Asn-457, Asn-512, and Asn-524 each carry an N-linked (GlcNAc...) asparagine glycan. Cysteines 490 and 542 form a disulfide. The chain crosses the membrane as a helical span at residues 582–602; it reads VLITMTVALAYIVLVVGLMLW. Topologically, residues 603 to 1033 are cytoplasmic; it reads CRYRRQARKA…LSKAMQSAEK (431 aa). Disordered stretches follow at residues 617–679 and 718–760; these read LSTK…KKSA and SPSD…KTSM. Residues 655-673 show a composition bias toward polar residues; the sequence is KSSGDAQKSDDTACSQQSR. Ser-678 bears the Phosphoserine mark. A Protein kinase; inactive domain is found at 692-1028; the sequence is LSELIQIGRG…QLGAALSKAM (337 aa). Residues 720–731 show a composition bias toward basic and acidic residues; the sequence is SDKDADTEKQHS.

Belongs to the protein kinase superfamily. Tyr protein kinase family. Insulin receptor subfamily. Interacts with plexA; component of a receptor complex that mediates the repulsive signaling in response to Semaphorin ligands.

Its subcellular location is the cell membrane. Functionally, acts as a calcium-dependent, homophilic cell adhesion molecule that regulates neural recognition during the development of the nervous system. Component of the repulsive Plexin signaling response to regulate motor axon guidance at the embryonic stage. Also component of a receptor complex that is required in the adult visual system to innervate the lamina layer; specific targeting of R1-R6 axons. This Drosophila yakuba (Fruit fly) protein is Tyrosine-protein kinase-like otk.